An 830-amino-acid polypeptide reads, in one-letter code: Probable glucan 1,3-beta-glucosidase D (830 aa).

Over residues 1–34 (MPSQSRSRDRYRGRDTEYTRRRYPDEHDYSHDDH) the composition is skewed to basic and acidic residues. Residues 1–279 (MPSQSRSRDR…PPMDARWPKG (279 aa)) are disordered. Residues 1–301 (MPSQSRSRDR…GRPFWKQKKW (301 aa)) are Cytoplasmic-facing. Residues 35–51 (DYDYDDDDDDNDDLEQD) show a composition bias toward acidic residues. Composition is skewed to basic and acidic residues over residues 52–98 (VTER…ERRR) and 110–175 (QHRE…KHQS). The segment covering 181–194 (SASHLLSADALARL) has biased composition (low complexity). Composition is skewed to basic and acidic residues over residues 198-215 (YEKE…AAKA), 228-243 (EQER…DRSR), and 253-264 (EEGRGPEMEFRR). A helical; Signal-anchor for type II membrane protein membrane pass occupies residues 302 to 322 (LIGIGVVILILVIVIPVAVVV). The Extracellular segment spans residues 323–830 (SKKHNDKPNA…PDFGSLPEYY (508 aa)). The segment at 327–351 (NDKPNATTTQPDGTTPSNSNLDGLS) is disordered. The span at 330 to 348 (PNATTTQPDGTTPSNSNLD) shows a compositional bias: polar residues. Residues Asn331, Asn376, Asn381, Asn393, Asn546, and Asn558 are each glycosylated (N-linked (GlcNAc...) asparagine). Glu597 acts as the Proton donor in catalysis. 4 N-linked (GlcNAc...) asparagine glycosylation sites follow: Asn610, Asn636, Asn669, and Asn689. Glu701 functions as the Nucleophile in the catalytic mechanism.

It belongs to the glycosyl hydrolase 5 (cellulase A) family.

It localises to the cell membrane. The catalysed reaction is Successive hydrolysis of beta-D-glucose units from the non-reducing ends of (1-&gt;3)-beta-D-glucans, releasing alpha-glucose.. Glucosidase involved in the degradation of cellulosic biomass. Active on lichenan. This Aspergillus clavatus (strain ATCC 1007 / CBS 513.65 / DSM 816 / NCTC 3887 / NRRL 1 / QM 1276 / 107) protein is Probable glucan 1,3-beta-glucosidase D (exgD).